The primary structure comprises 157 residues: 6,7-dimethyl-8-ribityllumazine synthase (157 aa).

Residues Phe22, 56-58 (AFE), and 81-83 (VLI) contribute to the 5-amino-6-(D-ribitylamino)uracil site. Residue 86–87 (ET) coordinates (2S)-2-hydroxy-3-oxobutyl phosphate. Residue His89 is the Proton donor of the active site. Phe114 serves as a coordination point for 5-amino-6-(D-ribitylamino)uracil. Arg128 serves as a coordination point for (2S)-2-hydroxy-3-oxobutyl phosphate.

It belongs to the DMRL synthase family.

It carries out the reaction (2S)-2-hydroxy-3-oxobutyl phosphate + 5-amino-6-(D-ribitylamino)uracil = 6,7-dimethyl-8-(1-D-ribityl)lumazine + phosphate + 2 H2O + H(+). The protein operates within cofactor biosynthesis; riboflavin biosynthesis; riboflavin from 2-hydroxy-3-oxobutyl phosphate and 5-amino-6-(D-ribitylamino)uracil: step 1/2. In terms of biological role, catalyzes the formation of 6,7-dimethyl-8-ribityllumazine by condensation of 5-amino-6-(D-ribitylamino)uracil with 3,4-dihydroxy-2-butanone 4-phosphate. This is the penultimate step in the biosynthesis of riboflavin. The chain is 6,7-dimethyl-8-ribityllumazine synthase from Chlamydia muridarum (strain MoPn / Nigg).